Here is a 248-residue protein sequence, read N- to C-terminus: Phycocyanobilin:ferredoxin oxidoreductase (248 aa).

The protein belongs to the HY2 family.

It catalyses the reaction (2R,3Z)-phycocyanobilin + 4 oxidized [2Fe-2S]-[ferredoxin] = biliverdin IXalpha + 4 reduced [2Fe-2S]-[ferredoxin] + 4 H(+). Its function is as follows. Catalyzes the four-electron reduction of biliverdin IX-alpha (2-electron reduction at both the A and D rings); the reaction proceeds via an isolatable 2-electron intermediate, 181,182-dihydrobiliverdin. The polypeptide is Phycocyanobilin:ferredoxin oxidoreductase (Synechococcus sp. (strain ATCC 27144 / PCC 6301 / SAUG 1402/1) (Anacystis nidulans)).